A 264-amino-acid polypeptide reads, in one-letter code: Proteasome subunit beta type-4 (264 aa).

N-acetylmethionine is present on M1. Positions 1–45 (MEALLESRSGLWAGGPAPGQFYRIPPTPGSSVDPVSALYGSPITR) are excised as a propeptide. The residue at position 102 (Y102) is a Phosphotyrosine.

This sequence belongs to the peptidase T1B family. In terms of assembly, the 26S proteasome consists of a 20S proteasome core and two 19S regulatory subunits. The 20S proteasome core is a barrel-shaped complex made of 28 subunits that are arranged in four stacked rings. The two outer rings are each formed by seven alpha subunits, and the two inner rings are formed by seven beta subunits. The proteolytic activity is exerted by three beta-subunits PSMB5, PSMB6 and PSMB7. Forms a ternary complex with SMAD1 and OAZ1 before PSMB4 is incorporated into the 20S proteasome. Interacts with PRPF19.

Its subcellular location is the cytoplasm. The protein resides in the nucleus. In terms of biological role, non-catalytic component of the 20S core proteasome complex involved in the proteolytic degradation of most intracellular proteins. This complex plays numerous essential roles within the cell by associating with different regulatory particles. Associated with two 19S regulatory particles, forms the 26S proteasome and thus participates in the ATP-dependent degradation of ubiquitinated proteins. The 26S proteasome plays a key role in the maintenance of protein homeostasis by removing misfolded or damaged proteins that could impair cellular functions, and by removing proteins whose functions are no longer required. Associated with the PA200 or PA28, the 20S proteasome mediates ubiquitin-independent protein degradation. This type of proteolysis is required in several pathways including spermatogenesis (20S-PA200 complex) or generation of a subset of MHC class I-presented antigenic peptides (20S-PA28 complex). SMAD1/OAZ1/PSMB4 complex mediates the degradation of the CREBBP/EP300 repressor SNIP1. The protein is Proteasome subunit beta type-4 (PSMB4) of Bos taurus (Bovine).